A 209-amino-acid polypeptide reads, in one-letter code: Pyridoxine/pyridoxamine 5'-phosphate oxidase (209 aa).

Substrate contacts are provided by residues 7-10 (REDY) and Lys64. FMN is bound by residues 59–64 (RIVLLK), 74–75 (FT), Arg80, and Lys81. Substrate is bound by residues Tyr121, Arg125, and Ser129. Residues 138 to 139 (QS) and Trp182 each bind FMN. 188–190 (RLH) is a binding site for substrate. FMN is bound at residue Arg192.

It belongs to the pyridoxamine 5'-phosphate oxidase family. As to quaternary structure, homodimer. FMN serves as cofactor.

It carries out the reaction pyridoxamine 5'-phosphate + O2 + H2O = pyridoxal 5'-phosphate + H2O2 + NH4(+). It catalyses the reaction pyridoxine 5'-phosphate + O2 = pyridoxal 5'-phosphate + H2O2. It functions in the pathway cofactor metabolism; pyridoxal 5'-phosphate salvage; pyridoxal 5'-phosphate from pyridoxamine 5'-phosphate: step 1/1. Its pathway is cofactor metabolism; pyridoxal 5'-phosphate salvage; pyridoxal 5'-phosphate from pyridoxine 5'-phosphate: step 1/1. Functionally, catalyzes the oxidation of either pyridoxine 5'-phosphate (PNP) or pyridoxamine 5'-phosphate (PMP) into pyridoxal 5'-phosphate (PLP). The sequence is that of Pyridoxine/pyridoxamine 5'-phosphate oxidase from Actinobacillus pleuropneumoniae serotype 5b (strain L20).